The sequence spans 548 residues: Glucose-6-phosphate isomerase (548 aa).

Glutamate 355 acts as the Proton donor in catalysis. Active-site residues include histidine 386 and lysine 514.

Belongs to the GPI family.

The protein localises to the cytoplasm. The catalysed reaction is alpha-D-glucose 6-phosphate = beta-D-fructose 6-phosphate. Its pathway is carbohydrate biosynthesis; gluconeogenesis. It participates in carbohydrate degradation; glycolysis; D-glyceraldehyde 3-phosphate and glycerone phosphate from D-glucose: step 2/4. Catalyzes the reversible isomerization of glucose-6-phosphate to fructose-6-phosphate. This Photorhabdus laumondii subsp. laumondii (strain DSM 15139 / CIP 105565 / TT01) (Photorhabdus luminescens subsp. laumondii) protein is Glucose-6-phosphate isomerase.